Reading from the N-terminus, the 403-residue chain is Protein WVD2-like 6 (403 aa).

2 disordered regions span residues 1 to 179 (MDSE…ALPN) and 254 to 403 (LKKI…AVEP). Residues 25–56 (GDSSNGNGGTSENLECCSTQHPMEASEGTQNE) show a composition bias toward polar residues. Residues 103–118 (SVAPNVKPVKSPKSKS) are compositionally biased toward low complexity. Ser-113 is modified (phosphoserine). Basic and acidic residues-rich tracts occupy residues 120–132 (NGREAHVTKHGNH), 139–153 (GTRDKPKLRETRKQV), and 162–171 (QYPKEDDGKP). Residues 263 to 273 (KSPKLGRKKTN) are compositionally biased toward basic residues. Low complexity predominate over residues 336-348 (KVAPAKAVTASTK). Basic and acidic residues predominate over residues 385 to 394 (VNEDRNESHM).

The protein belongs to the TPX2 family. In terms of tissue distribution, expressed in seedlings.

The protein localises to the cytoplasm. The protein resides in the cytoskeleton. Microtubule-associated protein (MAP) that regulates the orientation of interphase cortical microtubules. The polypeptide is Protein WVD2-like 6 (Arabidopsis thaliana (Mouse-ear cress)).